Reading from the N-terminus, the 207-residue chain is ATP synthase subunit a (207 aa).

A run of 6 helical transmembrane segments spans residues 3 to 23 (QHVI…TIFA), 62 to 82 (LIAS…IPGL), 88 to 108 (NLNT…FEGI), 119 to 139 (FLGP…LSHL), 158 to 178 (LISV…VMLI), and 180 to 200 (LIAV…YIAG).

Belongs to the ATPase A chain family. F-type ATPases have 2 components, CF(1) - the catalytic core - and CF(0) - the membrane proton channel. CF(1) has five subunits: alpha(3), beta(3), gamma(1), delta(1), epsilon(1). CF(0) has three main subunits: a(1), b(2) and c(9-12). The alpha and beta chains form an alternating ring which encloses part of the gamma chain. CF(1) is attached to CF(0) by a central stalk formed by the gamma and epsilon chains, while a peripheral stalk is formed by the delta and b chains.

Its subcellular location is the cell inner membrane. In terms of biological role, key component of the proton channel; it plays a direct role in the translocation of protons across the membrane. This Sulfurihydrogenibium sp. (strain YO3AOP1) protein is ATP synthase subunit a.